We begin with the raw amino-acid sequence, 289 residues long: F-box protein PP2-B15 (289 aa).

The region spanning 1 to 43 is the F-box domain; the sequence is MMLPEACVATILSFTTPADTISSAAVSSVFRVAGDSDFVWEKF.

This Arabidopsis thaliana (Mouse-ear cress) protein is F-box protein PP2-B15 (PP2B15).